Consider the following 248-residue polypeptide: Proteasome subunit alpha (248 aa).

At S2 the chain carries N-acetylserine; partial.

The protein belongs to the peptidase T1A family. In terms of assembly, the 20S proteasome core is composed of 14 alpha and 14 beta subunits that assemble into four stacked heptameric rings, resulting in a barrel-shaped structure. The two inner rings, each composed of seven catalytic beta subunits, are sandwiched by two outer rings, each composed of seven alpha subunits. The catalytic chamber with the active sites is on the inside of the barrel. Has a gated structure, the ends of the cylinder being occluded by the N-termini of the alpha-subunits. Is capped by the proteasome-associated ATPase, ARC.

It is found in the cytoplasm. The protein operates within protein degradation; proteasomal Pup-dependent pathway. The formation of the proteasomal ATPase ARC-20S proteasome complex, likely via the docking of the C-termini of ARC into the intersubunit pockets in the alpha-rings, may trigger opening of the gate for substrate entry. Interconversion between the open-gate and close-gate conformations leads to a dynamic regulation of the 20S proteasome proteolysis activity. Its function is as follows. Component of the proteasome core, a large protease complex with broad specificity involved in protein degradation. The sequence is that of Proteasome subunit alpha from Mycobacterium tuberculosis (strain CDC 1551 / Oshkosh).